We begin with the raw amino-acid sequence, 269 residues long: Eukaryotic translation initiation factor 3 subunit G-1 (269 aa).

An RRM domain is found at 188–266; it reads AAIRISNLSE…LILSVEWSKP (79 aa).

The protein belongs to the eIF-3 subunit G family. As to quaternary structure, component of the eukaryotic translation initiation factor 3 (eIF-3) complex. The eIF-3 complex interacts with pix.

It is found in the cytoplasm. RNA-binding component of the eukaryotic translation initiation factor 3 (eIF-3) complex, which is involved in protein synthesis of a specialized repertoire of mRNAs and, together with other initiation factors, stimulates binding of mRNA and methionyl-tRNAi to the 40S ribosome. The eIF-3 complex specifically targets and initiates translation of a subset of mRNAs involved in cell proliferation. This subunit can bind 18S rRNA. The chain is Eukaryotic translation initiation factor 3 subunit G-1 from Drosophila mojavensis (Fruit fly).